Consider the following 593-residue polypeptide: V-type sodium ATPase catalytic subunit A (593 aa).

232-239 contributes to the ATP binding site; the sequence is GPFGAGKT.

The protein belongs to the ATPase alpha/beta chains family.

It catalyses the reaction 4 Na(+)(in) + ATP + H2O = 4 Na(+)(out) + ADP + phosphate + H(+). In terms of biological role, involved in ATP-driven sodium extrusion. The sequence is that of V-type sodium ATPase catalytic subunit A (ntpA) from Enterococcus hirae (strain ATCC 9790 / DSM 20160 / JCM 8729 / LMG 6399 / NBRC 3181 / NCIMB 6459 / NCDO 1258 / NCTC 12367 / WDCM 00089 / R).